Reading from the N-terminus, the 321-residue chain is Glucokinase (321 aa).

8–13 is a binding site for ATP; sequence GDVGGT.

Belongs to the bacterial glucokinase family.

It is found in the cytoplasm. The enzyme catalyses D-glucose + ATP = D-glucose 6-phosphate + ADP + H(+). The sequence is that of Glucokinase from Salmonella arizonae (strain ATCC BAA-731 / CDC346-86 / RSK2980).